The chain runs to 168 residues: Protein-export protein SecB (168 aa).

This sequence belongs to the SecB family. In terms of assembly, homotetramer, a dimer of dimers. One homotetramer interacts with 1 SecA dimer.

The protein localises to the cytoplasm. Its function is as follows. One of the proteins required for the normal export of preproteins out of the cell cytoplasm. It is a molecular chaperone that binds to a subset of precursor proteins, maintaining them in a translocation-competent state. It also specifically binds to its receptor SecA. The sequence is that of Protein-export protein SecB from Thioalkalivibrio sulfidiphilus (strain HL-EbGR7).